Consider the following 296-residue polypeptide: Tubulin polyglutamylase complex subunit 2 (296 aa).

Residues 257 to 296 (KILIPKKKGPVQPVSGQKGPGPLAPPTSKPSAGCGNPVRK) are disordered.

Part of the neuronal tubulin polyglutamylase complex which contains TPGS1, TPGS2, TTLL1, LRRC49 and NICN1. Interacts with CSTPP1 and LRRC49.

It is found in the cytoplasm. The protein localises to the cytoskeleton. Its subcellular location is the microtubule organizing center. The protein resides in the centrosome. It localises to the centriolar satellite. Subunit of the tubulin polyglutamylase complex (TPGC). The complex mediates cilia and flagella polyglutamylation which is essential for their biogenesis and motility. This is Tubulin polyglutamylase complex subunit 2 (Tpgs2) from Rattus norvegicus (Rat).